The primary structure comprises 814 residues: MKVSQNWLKNLVEISSTPVDLSEKLSIGGFEVESLEDCSKNVNGVVLGKVLSVLKHDGSDKLSICQVDIGTSKNLQIICGARNIKPNVYVYVATVGAKLNAVDLTIKRSEIRGVMSEGMICSLQELGLEDSSEGIEIIDEDLALKHELGTPVSDLLQLNDFIYDLAITANRPDGMSVIGIAREISALLESKLSFPELNHKYNIHLNKGIKLCPEAITSNCIYTISCIDGVNGNKLSPIWLKDRIEKSGIKSINLLVDLTNYILLEQGQPLHAFDKEKLSNLIGKDVSPEDFSVRKAKDNESLVCLDGKKYELNENITVVTCSDKPVAIAGVIGGLETSVSNTTSSIYLEGAVFNPVTIRKSSKAVGIRTESSSRYEKGISSKNTISAVTRAMNLLEEYFSINLPIINTSNLKNNEDIFIKLRRSRIHKILGPLIINDQFEKRNISDTEIVDKLTLIGCSLKSKEYGWDVAVIPNRSQDLIREIDLIEEIARLIGYDRFDLNLPNPIKPGKLSSEQLALRKVKNGFTENGFNEVLSYSLVPEDKETLIKISNPLLLETSCLRDNIWKEHLEIVNRNIKAGQNSCYIFEIGNVFHKNTEFIQKEVLNGAIFGNKRFEKWVNSNKDNDLNYYQARGKLKEALSSLNIKIDDKPTDSIDFLHPGRTAKLIIEGKDAGYFGEIHPKLILEKKSLKIVYLFSINVDNLLGASTRKNKWIPIFKQYPIVPKIERDINFVFSKKFLISDITSLIKKTGKNLLEDVYLIDIFEDIKLGEDYISYTFRLSYRAQDKTLLDSDIKTIHSSIISNIEKSFQTKLRN.

The 115-residue stretch at 39–153 folds into the tRNA-binding domain; that stretch reads SKNVNGVVLG…LKHELGTPVS (115 aa). Positions 414–500 constitute a B5 domain; it reads NEDIFIKLRR…RLIGYDRFDL (87 aa). 4 residues coordinate Mg(2+): Asp-478, Asp-484, Glu-487, and Glu-488. An FDX-ACB domain is found at 720-813; sequence PIVPKIERDI…IEKSFQTKLR (94 aa).

This sequence belongs to the phenylalanyl-tRNA synthetase beta subunit family. Type 1 subfamily. As to quaternary structure, tetramer of two alpha and two beta subunits. It depends on Mg(2+) as a cofactor.

The protein resides in the cytoplasm. It catalyses the reaction tRNA(Phe) + L-phenylalanine + ATP = L-phenylalanyl-tRNA(Phe) + AMP + diphosphate + H(+). The chain is Phenylalanine--tRNA ligase beta subunit from Prochlorococcus marinus (strain MIT 9312).